Reading from the N-terminus, the 344-residue chain is Dihydroorotase (344 aa).

Zn(2+) is bound by residues histidine 13 and histidine 15. Residues 15–17 (HFR) and asparagine 41 contribute to the substrate site. Residues lysine 98, histidine 135, and histidine 173 each coordinate Zn(2+). Residue lysine 98 is modified to N6-carboxylysine. Substrate is bound at residue histidine 135. Leucine 218 contributes to the substrate binding site. Aspartate 246 contacts Zn(2+). Residue aspartate 246 is part of the active site. The substrate site is built by histidine 250 and alanine 262.

The protein belongs to the metallo-dependent hydrolases superfamily. DHOase family. Class II DHOase subfamily. In terms of assembly, homodimer. The cofactor is Zn(2+).

It carries out the reaction (S)-dihydroorotate + H2O = N-carbamoyl-L-aspartate + H(+). Its pathway is pyrimidine metabolism; UMP biosynthesis via de novo pathway; (S)-dihydroorotate from bicarbonate: step 3/3. In terms of biological role, catalyzes the reversible cyclization of carbamoyl aspartate to dihydroorotate. The sequence is that of Dihydroorotase from Pseudoalteromonas atlantica (strain T6c / ATCC BAA-1087).